Reading from the N-terminus, the 67-residue chain is Systemic RNA interference defective protein 5 (67 aa).

At 1-18 (MPSKNCAKNLHACQWERD) the chain is on the extracellular side. A helical membrane pass occupies residues 19–39 (IALVFLGLMVLFNIGQVVYMN). Residues 40–67 (RARLYRLIRRGAEQIPADDEEPIIGIRD) are Cytoplasmic-facing.

In terms of tissue distribution, ubiquitously present in most tissues tested. Expressed in the somatic cells of intestine, muscle, neurons, somatic gonad and embryos but not in the germline (at protein level).

The protein resides in the late endosome membrane. Functionally, plays a role in RNA-mediated gene silencing by mediating transport of both ingested and endogenous dsRNA between cells. Not required for the uptake of dsRNA from the intestinal lumen. This chain is Systemic RNA interference defective protein 5, found in Caenorhabditis elegans.